We begin with the raw amino-acid sequence, 1178 residues long: Tricalbin-2 (1178 aa).

A compositionally biased stretch (polar residues) spans 1–17 (MSPNSSKTRTDQISSMP). Residues 1–27 (MSPNSSKTRTDQISSMPGINEATKVES) are disordered. Residues 1–98 (MSPNSSKTRT…NLLPDKFYGD (98 aa)) are Cytoplasmic-facing. A helical membrane pass occupies residues 99 to 119 (WYHEVAILIIAGLCSFVLGYF). Lys-120 is a topological domain (extracellular). Residues 121–141 (FSLASVLIVMLTTGMLYRTSS) traverse the membrane as a helical segment. The Cytoplasmic portion of the chain corresponds to 142–1178 (KKYRESLRDL…TGDKKSEEKQ (1037 aa)). One can recognise an SMP-LTD domain in the interval 164 to 367 (DYESVEWLNT…PPFSLQLNIP (204 aa)). C2 domains are found at residues 358–481 (PPFS…EKVH), 504–628 (PKKL…LKVT), and 632–749 (RPVD…DKYT). The stretch at 784–821 (LSLEEAKEVDEINEKKDKLEKQKSTLDDKNISKEEKER) forms a coiled coil. Residues 962–1086 (QVSWFPVTAT…DPESDTTFNI (125 aa)) enclose the C2 4 domain. Ser-991 bears the Phosphoserine mark.

The protein belongs to the tricalbin family. In terms of assembly, interacts with TCB1 and TCB3 via its C-terminal domain.

It localises to the cell membrane. The protein resides in the endoplasmic reticulum membrane. Its function is as follows. May play a role in membrane trafficking. This chain is Tricalbin-2 (TCB2), found in Saccharomyces cerevisiae (strain ATCC 204508 / S288c) (Baker's yeast).